A 701-amino-acid chain; its full sequence is E3 ubiquitin-protein ligase RNF19B (701 aa).

The segment at 1-97 (MGSEKDSESP…PAEPLSTSQA (97 aa)) is disordered. Residues 1 to 304 (MGSEKDSESP…VCGCEFCWLC (304 aa)) are required for ubiquitin ligase activity and for protection against staurosporin-induced cell death. Over residues 57–72 (QQLHQQQQIQQQQLLQ) the composition is skewed to low complexity. The segment at 103–323 (ELLECPLCLV…LSPSGCTFWG (221 aa)) is TRIAD supradomain. Zn(2+)-binding residues include C107, C110, C130, C133, C194, C199, C216, C221, C226, C229, H234, C239, C273, and C276. The RING-type 1 zinc finger occupies 107–156 (CPLCLVRQPAEQLPELQGCSHRSCLCCLRQYLRIEITESRVQLSCPECAE). An IBR-type zinc finger spans residues 174–239 (EKYEEFLLRR…KQAWHPNQTC (66 aa)). The RING-type 2; atypical zinc-finger motif lies at 273–304 (CPRCGAYIIKMNDGSCNHMTCAVCGCEFCWLC). C288 is a catalytic residue. Residues C293, C296, C301, C304, H312, and C319 each coordinate Zn(2+). Helical transmembrane passes span 340-360 (LIGA…AMVI) and 396-416 (IITA…IMLA). 2 disordered regions span residues 472–495 (LEGA…PGGL) and 658–677 (AELT…HGAP).

The protein belongs to the RBR family. RNF19 subfamily. In terms of assembly, interacts with UBE2L3, UBE2L6 and UCKL1.

The protein resides in the cytoplasmic granule membrane. It localises to the endoplasmic reticulum membrane. The catalysed reaction is [E2 ubiquitin-conjugating enzyme]-S-ubiquitinyl-L-cysteine + [acceptor protein]-L-lysine = [E2 ubiquitin-conjugating enzyme]-L-cysteine + [acceptor protein]-N(6)-ubiquitinyl-L-lysine.. Its pathway is protein modification; protein ubiquitination. In terms of biological role, E3 ubiquitin-protein ligase which accepts ubiquitin from E2 ubiquitin-conjugating enzymes UBE2L3 and UBE2L6 in the form of a thioester and then directly transfers the ubiquitin to targeted substrates, such as UCKL1. Involved in the cytolytic activity of natural killer cells and cytotoxic T-cells. Protects against staurosporin-induced cell death. This chain is E3 ubiquitin-protein ligase RNF19B (rnf19b), found in Danio rerio (Zebrafish).